We begin with the raw amino-acid sequence, 379 residues long: UDP-4-amino-4-deoxy-L-arabinose--oxoglutarate aminotransferase (379 aa).

An N6-(pyridoxal phosphate)lysine modification is found at Lys-182.

The protein belongs to the DegT/DnrJ/EryC1 family. ArnB subfamily. As to quaternary structure, homodimer. Pyridoxal 5'-phosphate serves as cofactor.

The enzyme catalyses UDP-4-amino-4-deoxy-beta-L-arabinose + 2-oxoglutarate = UDP-beta-L-threo-pentopyranos-4-ulose + L-glutamate. Its pathway is nucleotide-sugar biosynthesis; UDP-4-deoxy-4-formamido-beta-L-arabinose biosynthesis; UDP-4-deoxy-4-formamido-beta-L-arabinose from UDP-alpha-D-glucuronate: step 2/3. It participates in bacterial outer membrane biogenesis; lipopolysaccharide biosynthesis. Catalyzes the conversion of UDP-4-keto-arabinose (UDP-Ara4O) to UDP-4-amino-4-deoxy-L-arabinose (UDP-L-Ara4N). The modified arabinose is attached to lipid A and is required for resistance to polymyxin and cationic antimicrobial peptides. The sequence is that of UDP-4-amino-4-deoxy-L-arabinose--oxoglutarate aminotransferase from Escherichia coli O127:H6 (strain E2348/69 / EPEC).